The sequence spans 252 residues: NLP effector protein Pc118356 (252 aa).

The N-terminal stretch at 1–17 (MALTVLAATALTALIMG) is a signal peptide. N-linked (GlcNAc...) asparagine glycans are attached at residues N20 and N67. A Hepta-peptide GHRHDWE motif motif is present at residues 121–127 (QDRHFWE). An N-linked (GlcNAc...) asparagine glycan is attached at N166.

Belongs to the Necrosis inducing protein (NPP1) family.

The protein resides in the secreted. Its function is as follows. Secreted effector that contributes strongly to virulence during infection by P.capsici. The polypeptide is NLP effector protein Pc118356 (Phytophthora capsici).